The chain runs to 521 residues: Vang-like protein 2 (521 aa).

The disordered stretch occupies residues 1-81; the sequence is MDTESQYSGY…TTVVTGTSEH (81 aa). Residues 1-108 are Cytoplasmic-facing; it reads MDTESQYSGY…VPLDCSRHLG (108 aa). Positions 15–33 are enriched in basic residues; that stretch reads GHSRSSRKHRDRRDRHRSK. Residues 57–67 are compositionally biased toward basic and acidic residues; sequence ESTRGDERDDN. A compositionally biased stretch (low complexity) spans 69 to 81; sequence GETTTVVTGTSEH. The chain crosses the membrane as a helical span at residues 109 to 129; sequence VAAGATLALLSFLTPLAFLLL. The Extracellular portion of the chain corresponds to 130–147; it reads PPLLWREELEPCGTACEG. The chain crosses the membrane as a helical span at residues 148-168; the sequence is LFISVAFKLLILLLGSWALFF. At 169 to 178 the chain is on the cytoplasmic side; it reads RRPKASLPRV. The chain crosses the membrane as a helical span at residues 179–199; the sequence is FVLRALLMVLVFLLVVSYWLF. Topologically, residues 200–217 are extracellular; that stretch reads YGVRILDARERSYQGVVQ. Residues 218 to 238 traverse the membrane as a helical segment; that stretch reads FAVSLVDALLFVHYLAVVLLE. Residues 239–521 lie on the Cytoplasmic side of the membrane; it reads LRQLQPQFTL…VMRLQSETSV (283 aa).

It belongs to the Vang family. Homodimer and heterodimer with VANGL1. Interacts through its C-terminal region with the N-terminal half of DVL1, DVL2 and DVL3. The PDZ domain of DVL1, DVL2 and DVL3 is required for the interaction. Also interacts with the PDZ domains of MAGI3, SCRIB/SCRB1 and FZD3. Interacts with PRICKLE3.

It localises to the cell membrane. Involved in the control of early morphogenesis and patterning of both axial midline structures and the development of neural plate. Plays a role in the regulation of planar cell polarity, particularly in the orientation of stereociliary bundles in the cochlea. Required for polarization and movement of myocardializing cells in the outflow tract and seems to act via RHOA signaling to regulate this process. Required for cell surface localization of FZD3 and FZD6 in the inner ear. In Homo sapiens (Human), this protein is Vang-like protein 2 (VANGL2).